An 838-amino-acid polypeptide reads, in one-letter code: Periplasmic nitrate reductase (838 aa).

Residues Met1 to Ala29 constitute a signal peptide (tat-type signal). One can recognise a 4Fe-4S Mo/W bis-MGD-type domain in the interval Leu41–Asp97. Positions 48, 51, 55, and 83 each coordinate [4Fe-4S] cluster. Residues Lys85, Gln152, Asn177, Cys181, Trp214 to Met221, Ser245 to His249, Met382, Gln386, Asn492, Ser518 to Asp519, Lys541, Asp568, and Thr728 to Ser737 each bind Mo-bis(molybdopterin guanine dinucleotide). Position 804 (Trp804) interacts with substrate. Residues Asn812 and Lys829 each coordinate Mo-bis(molybdopterin guanine dinucleotide).

Belongs to the prokaryotic molybdopterin-containing oxidoreductase family. NasA/NapA/NarB subfamily. As to quaternary structure, component of the periplasmic nitrate reductase NapAB complex composed of NapA and NapB. The cofactor is [4Fe-4S] cluster. Mo-bis(molybdopterin guanine dinucleotide) is required as a cofactor. Post-translationally, predicted to be exported by the Tat system. The position of the signal peptide cleavage has not been experimentally proven.

The protein localises to the periplasm. The catalysed reaction is 2 Fe(II)-[cytochrome] + nitrate + 2 H(+) = 2 Fe(III)-[cytochrome] + nitrite + H2O. In terms of biological role, catalytic subunit of the periplasmic nitrate reductase complex NapAB. Receives electrons from NapB and catalyzes the reduction of nitrate to nitrite. The protein is Periplasmic nitrate reductase of Ralstonia pickettii (strain 12J).